Reading from the N-terminus, the 137-residue chain is Large ribosomal subunit protein uL16 (137 aa).

This sequence belongs to the universal ribosomal protein uL16 family. As to quaternary structure, part of the 50S ribosomal subunit.

Functionally, binds 23S rRNA and is also seen to make contacts with the A and possibly P site tRNAs. The protein is Large ribosomal subunit protein uL16 of Methylobacterium sp. (strain 4-46).